The chain runs to 82 residues: ATP synthase subunit c (82 aa).

The next 2 membrane-spanning stretches (helical) occupy residues 7 to 27 (AASV…PGIG) and 57 to 77 (FAFM…LLFA).

This sequence belongs to the ATPase C chain family. F-type ATPases have 2 components, F(1) - the catalytic core - and F(0) - the membrane proton channel. F(1) has five subunits: alpha(3), beta(3), gamma(1), delta(1), epsilon(1). F(0) has four main subunits: a(1), b(1), b'(1) and c(10-14). The alpha and beta chains form an alternating ring which encloses part of the gamma chain. F(1) is attached to F(0) by a central stalk formed by the gamma and epsilon chains, while a peripheral stalk is formed by the delta, b and b' chains.

The protein localises to the cellular thylakoid membrane. Functionally, f(1)F(0) ATP synthase produces ATP from ADP in the presence of a proton or sodium gradient. F-type ATPases consist of two structural domains, F(1) containing the extramembraneous catalytic core and F(0) containing the membrane proton channel, linked together by a central stalk and a peripheral stalk. During catalysis, ATP synthesis in the catalytic domain of F(1) is coupled via a rotary mechanism of the central stalk subunits to proton translocation. Its function is as follows. Key component of the F(0) channel; it plays a direct role in translocation across the membrane. A homomeric c-ring of between 10-14 subunits forms the central stalk rotor element with the F(1) delta and epsilon subunits. The chain is ATP synthase subunit c from Prochlorococcus marinus (strain MIT 9303).